Here is a 348-residue protein sequence, read N- to C-terminus: Dihydroorotase (348 aa).

2 residues coordinate Zn(2+): His-17 and His-19. Residues 19-21 (HLR) and Asn-45 each bind substrate. Residues Lys-103, His-140, and His-178 each coordinate Zn(2+). Lys-103 is subject to N6-carboxylysine. His-140 lines the substrate pocket. Leu-223 provides a ligand contact to substrate. A Zn(2+)-binding site is contributed by Asp-251. Asp-251 is a catalytic residue. Substrate contacts are provided by His-255 and Ala-267.

Belongs to the metallo-dependent hydrolases superfamily. DHOase family. Class II DHOase subfamily. As to quaternary structure, homodimer. It depends on Zn(2+) as a cofactor.

The catalysed reaction is (S)-dihydroorotate + H2O = N-carbamoyl-L-aspartate + H(+). The protein operates within pyrimidine metabolism; UMP biosynthesis via de novo pathway; (S)-dihydroorotate from bicarbonate: step 3/3. Functionally, catalyzes the reversible cyclization of carbamoyl aspartate to dihydroorotate. This Salmonella paratyphi A (strain ATCC 9150 / SARB42) protein is Dihydroorotase.